Reading from the N-terminus, the 1379-residue chain is ABC multidrug transporter MDR2 (1379 aa).

A helical membrane pass occupies residues 65–85; sequence IALIVIGTIAGIGAGIPFPLL. The ABC transmembrane type-1 1 domain maps to 69–367; the sequence is VIGTIAGIGA…MAPFMHIFAS (299 aa). Residue asparagine 97 is glycosylated (N-linked (GlcNAc...) asparagine). Helical transmembrane passes span 119–139, 193–213, 215–235, 301–321, and 336–356; these read VLQVIYVSILNFVCMYIHTGC, KVGLFIGTISYFVAAYIVAFL, VATIAAMLMSVVPIYFLMAFG, IQFGMLYFVAYASNALAFWQG, and VSVGAVYTVIFVLLDASFVLS. In terms of domain architecture, ABC transporter 1 spans 403–682; that stretch reads IELQDVTFNY…DGVYAGMVRL (280 aa). 438-445 is a binding site for ATP; the sequence is GTSGSGKS. N-linked (GlcNAc...) asparagine glycans are attached at residues asparagine 552 and asparagine 633. The segment at 738–758 is disordered; that stretch reads YMPEEADSLPTEPENEKEKPK. 4 helical membrane passes run 781–801, 820–840, 881–901, and 920–942; these read LGLITSIMIGVSYTGEAVIFG, GMLFGLLFFILAIVKFAAVIV, LLVALVTSDASALSSLTGTTI, and VIAWKIAVVLLATLPVLLASGVL. The ABC transmembrane type-1 2 domain occupies 781–1068; it reads LGLITSIMIG…MFALVPDISK (288 aa). Asparagine 989 carries N-linked (GlcNAc...) asparagine glycosylation. Transmembrane regions (helical) follow at residues 1008–1028 and 1032–1052; these read FWLSLAYSISTLVYALAYWWG and ILAGMYTQVQFFIVLPALLFS. An ABC transporter 2 domain is found at 1135–1374; sequence VQFRNVHFRY…CESYRANVIH (240 aa). 1170-1177 serves as a coordination point for ATP; sequence GPSGSGKS.

It belongs to the ABC transporter superfamily. ABCB family. Multidrug resistance exporter (TC 3.A.1.201) subfamily.

It localises to the cell membrane. Its function is as follows. Pleiotropic ABC efflux transporter that may be involved in the modulation susceptibility to a wide range of unrelated cytotoxic compounds. The chain is ABC multidrug transporter MDR2 from Trichophyton interdigitale (strain MR816).